A 383-amino-acid chain; its full sequence is Protein RecA (383 aa).

79–86 (GPESSGKT) serves as a coordination point for ATP.

It belongs to the RecA family.

It localises to the cytoplasm. In terms of biological role, can catalyze the hydrolysis of ATP in the presence of single-stranded DNA, the ATP-dependent uptake of single-stranded DNA by duplex DNA, and the ATP-dependent hybridization of homologous single-stranded DNAs. It interacts with LexA causing its activation and leading to its autocatalytic cleavage. This chain is Protein RecA, found in Streptococcus gordonii (strain Challis / ATCC 35105 / BCRC 15272 / CH1 / DL1 / V288).